Reading from the N-terminus, the 468-residue chain is MTKTLPKDFIFGGATAAYQAEGATKTDGKGPVAWDKYLEDNYWYTAEPASDFYNRYPVDLKLAEEYNVNGIRISIAWSRVFPTGYGEVNRKGVEYYHNLFAECHKRGVEPFVTLHHFDTPEALHSNGDFLNRDNIDHFVAYAAFCFEEFPEVNYWTTFNEIGPIGDGQYLVGKFPPGIQYDLAKVFQSHHNMMVSHARAVKLYKDKGYKGEIGVVHALPTKYPYDPANPDDVRAAELEDIIHNKFILDATYLGRYSEKTMEGVQHILAANGGELDLREEDFSILEAAKDLNDFLGINYYMSDWMQAFDGETEIIHNGKGEKGSSKYQIKGVGRREAPVNVPKTDWDWIIYPQGLYDQIMRVKADYPNYKKIYITENGLGYKDEFVDGTVYDDGRIDYVKKHLEVISDAISDGANVKGYFIWSLMDVFSWSNGYEKRYGLFYVDFETQERYPKKSAHWYKKVAETQVID.

D-galactose 6-phosphate is bound by residues Gln-19, His-116, Asn-159, Glu-160, and Asn-297. The Proton donor role is filled by Glu-160. Glu-375 (nucleophile) is an active-site residue. Ser-428, Trp-429, Lys-435, and Tyr-437 together coordinate D-galactose 6-phosphate.

Belongs to the glycosyl hydrolase 1 family.

It catalyses the reaction a 6-phospho-beta-D-galactoside + H2O = D-galactose 6-phosphate + an alcohol. It participates in carbohydrate metabolism; lactose degradation; D-galactose 6-phosphate and beta-D-glucose from lactose 6-phosphate: step 1/1. The chain is 6-phospho-beta-galactosidase from Streptococcus uberis (strain ATCC BAA-854 / 0140J).